The sequence spans 478 residues: Cytochrome c-552 (478 aa).

An N-terminal signal peptide occupies residues 1 to 26; sequence MTRIKINARRIFSLLIPFFFFTSVHA. His94 is a binding site for heme c. Positions 122, 125, and 126 each coordinate heme. Heme c is bound by residues Cys160, Cys163, His164, Cys209, Cys212, and His213. 4 residues coordinate Ca(2+): Glu215, Tyr216, Lys261, and Gln263. Tyr216 contributes to the substrate binding site. Substrate is bound at residue His264. Residues His275, Cys282, Cys285, His286, His301, Cys314, Cys317, His318, and His393 each coordinate heme c.

It belongs to the cytochrome c-552 family. The cofactor is Ca(2+). Heme c serves as cofactor.

It is found in the periplasm. The enzyme catalyses 6 Fe(III)-[cytochrome c] + NH4(+) + 2 H2O = 6 Fe(II)-[cytochrome c] + nitrite + 8 H(+). It functions in the pathway nitrogen metabolism; nitrate reduction (assimilation). Its function is as follows. Catalyzes the reduction of nitrite to ammonia, consuming six electrons in the process. This chain is Cytochrome c-552, found in Escherichia coli O157:H7 (strain EC4115 / EHEC).